The sequence spans 339 residues: tRNA N6-adenosine threonylcarbamoyltransferase (339 aa).

Fe cation is bound by residues His-111 and His-115. Substrate-binding positions include 134-138 (LVSGG), Asp-167, Gly-180, and Asn-274. A Fe cation-binding site is contributed by Asp-302.

The protein belongs to the KAE1 / TsaD family. Requires Fe(2+) as cofactor.

The protein resides in the cytoplasm. It catalyses the reaction L-threonylcarbamoyladenylate + adenosine(37) in tRNA = N(6)-L-threonylcarbamoyladenosine(37) in tRNA + AMP + H(+). Required for the formation of a threonylcarbamoyl group on adenosine at position 37 (t(6)A37) in tRNAs that read codons beginning with adenine. Is involved in the transfer of the threonylcarbamoyl moiety of threonylcarbamoyl-AMP (TC-AMP) to the N6 group of A37, together with TsaE and TsaB. TsaD likely plays a direct catalytic role in this reaction. The sequence is that of tRNA N6-adenosine threonylcarbamoyltransferase from Methylobacillus flagellatus (strain ATCC 51484 / DSM 6875 / VKM B-1610 / KT).